Consider the following 320-residue polypeptide: Small ribosomal subunit protein uS2 (320 aa).

Acidic residues predominate over residues Met1–Ala22. The disordered stretch occupies residues Met1–Arg83. Over residues Asp27–Asp41 the composition is skewed to low complexity. Composition is skewed to acidic residues over residues Thr42–Pro57 and Asp65–Glu78.

This sequence belongs to the universal ribosomal protein uS2 family.

This is Small ribosomal subunit protein uS2 from Salinibacter ruber (strain DSM 13855 / M31).